A 185-amino-acid polypeptide reads, in one-letter code: Protein TIFY 5 (185 aa).

Residues 38-72 (AAEARRNLTIFYNGRMCAVNVTELQARTIISMASQ) form the Tify domain. Positions 77 to 185 (KQQQQQIQGR…RAAAPLYARR (109 aa)) are disordered. Residues 137–157 (PRAGLQAAAAAAPTMNQPPAA) are compositionally biased toward low complexity. Positions 155–182 (PAASGLSMKRSLQRFLEKRKTRAAAPLY) match the Jas motif. The Nuclear localization signal motif lies at 162–169 (MKRSLQRF).

It belongs to the TIFY/JAZ family. In terms of processing, ubiquitinated. Targeted for degradation by the SCF(COI1) E3 ubiquitin ligase-proteasome pathway during jasmonate signaling.

It is found in the nucleus. Functionally, repressor of jasmonate responses. The protein is Protein TIFY 5 of Oryza sativa subsp. indica (Rice).